The chain runs to 396 residues: 1-deoxy-D-xylulose 5-phosphate reductoisomerase (396 aa).

Residues Thr15, Gly16, Ser17, Ile18, Gly41, and Asn130 each contribute to the NADPH site. Residue Lys131 coordinates 1-deoxy-D-xylulose 5-phosphate. Glu132 is an NADPH binding site. Residue Asp155 participates in Mn(2+) binding. Ser156, Glu157, Ser181, and His204 together coordinate 1-deoxy-D-xylulose 5-phosphate. Glu157 lines the Mn(2+) pocket. Gly210 contributes to the NADPH binding site. 1-deoxy-D-xylulose 5-phosphate contacts are provided by Ser217, Asn222, Lys223, and Glu226. Glu226 is a binding site for Mn(2+).

This sequence belongs to the DXR family. Mg(2+) is required as a cofactor. It depends on Mn(2+) as a cofactor.

It catalyses the reaction 2-C-methyl-D-erythritol 4-phosphate + NADP(+) = 1-deoxy-D-xylulose 5-phosphate + NADPH + H(+). It functions in the pathway isoprenoid biosynthesis; isopentenyl diphosphate biosynthesis via DXP pathway; isopentenyl diphosphate from 1-deoxy-D-xylulose 5-phosphate: step 1/6. In terms of biological role, catalyzes the NADPH-dependent rearrangement and reduction of 1-deoxy-D-xylulose-5-phosphate (DXP) to 2-C-methyl-D-erythritol 4-phosphate (MEP). This Bifidobacterium longum subsp. infantis (strain ATCC 15697 / DSM 20088 / JCM 1222 / NCTC 11817 / S12) protein is 1-deoxy-D-xylulose 5-phosphate reductoisomerase.